A 239-amino-acid chain; its full sequence is 7-cyano-7-deazaguanine synthase (239 aa).

Position 13-23 (phenylalanine 13–leucine 23) interacts with ATP. Residues cysteine 192, cysteine 201, cysteine 204, and cysteine 207 each coordinate Zn(2+).

It belongs to the QueC family. The cofactor is Zn(2+).

It carries out the reaction 7-carboxy-7-deazaguanine + NH4(+) + ATP = 7-cyano-7-deazaguanine + ADP + phosphate + H2O + H(+). It participates in purine metabolism; 7-cyano-7-deazaguanine biosynthesis. Catalyzes the ATP-dependent conversion of 7-carboxy-7-deazaguanine (CDG) to 7-cyano-7-deazaguanine (preQ(0)). The chain is 7-cyano-7-deazaguanine synthase from Shewanella sp. (strain MR-7).